Reading from the N-terminus, the 298-residue chain is 4-hydroxy-3-methylbut-2-enyl diphosphate reductase (298 aa).

C12 is a [4Fe-4S] cluster binding site. (2E)-4-hydroxy-3-methylbut-2-enyl diphosphate contacts are provided by H40 and H78. Residues H40 and H78 each coordinate dimethylallyl diphosphate. Positions 40 and 78 each coordinate isopentenyl diphosphate. A [4Fe-4S] cluster-binding site is contributed by C100. Residue H128 coordinates (2E)-4-hydroxy-3-methylbut-2-enyl diphosphate. H128 contacts dimethylallyl diphosphate. An isopentenyl diphosphate-binding site is contributed by H128. E130 serves as the catalytic Proton donor. T171 contacts (2E)-4-hydroxy-3-methylbut-2-enyl diphosphate. Position 200 (C200) interacts with [4Fe-4S] cluster. Positions 228, 229, 230, and 270 each coordinate (2E)-4-hydroxy-3-methylbut-2-enyl diphosphate. Dimethylallyl diphosphate-binding residues include S228, S229, N230, and S270. Positions 228, 229, 230, and 270 each coordinate isopentenyl diphosphate.

This sequence belongs to the IspH family. The cofactor is [4Fe-4S] cluster.

The enzyme catalyses isopentenyl diphosphate + 2 oxidized [2Fe-2S]-[ferredoxin] + H2O = (2E)-4-hydroxy-3-methylbut-2-enyl diphosphate + 2 reduced [2Fe-2S]-[ferredoxin] + 2 H(+). It catalyses the reaction dimethylallyl diphosphate + 2 oxidized [2Fe-2S]-[ferredoxin] + H2O = (2E)-4-hydroxy-3-methylbut-2-enyl diphosphate + 2 reduced [2Fe-2S]-[ferredoxin] + 2 H(+). Its pathway is isoprenoid biosynthesis; dimethylallyl diphosphate biosynthesis; dimethylallyl diphosphate from (2E)-4-hydroxy-3-methylbutenyl diphosphate: step 1/1. The protein operates within isoprenoid biosynthesis; isopentenyl diphosphate biosynthesis via DXP pathway; isopentenyl diphosphate from 1-deoxy-D-xylulose 5-phosphate: step 6/6. Functionally, catalyzes the conversion of 1-hydroxy-2-methyl-2-(E)-butenyl 4-diphosphate (HMBPP) into a mixture of isopentenyl diphosphate (IPP) and dimethylallyl diphosphate (DMAPP). Acts in the terminal step of the DOXP/MEP pathway for isoprenoid precursor biosynthesis. The sequence is that of 4-hydroxy-3-methylbut-2-enyl diphosphate reductase from Kosmotoga olearia (strain ATCC BAA-1733 / DSM 21960 / TBF 19.5.1).